Here is a 498-residue protein sequence, read N- to C-terminus: Isocitrate dehydrogenase [NADP], mitochondrial (498 aa).

NADP(+) contacts are provided by residues 164–166 and Arg171; that span reads TIT. Substrate is bound at residue Thr166. Substrate-binding positions include 183 to 189, Arg198, and Arg221; that span reads SPNGTIR. Asp339 is a binding site for Mn(2+). Lys347 contributes to the NADP(+) binding site. Asp362 is a binding site for Mn(2+). NADP(+) is bound by residues 397–402 and Asn415; that span reads GTVTRH.

Belongs to the isocitrate and isopropylmalate dehydrogenases family. Mg(2+) serves as cofactor. The cofactor is Mn(2+).

The protein localises to the mitochondrion. The enzyme catalyses D-threo-isocitrate + NADP(+) = 2-oxoglutarate + CO2 + NADPH. The sequence is that of Isocitrate dehydrogenase [NADP], mitochondrial (icdA) from Aspergillus niger.